The chain runs to 434 residues: Histidinol dehydrogenase (434 aa).

Substrate is bound by residues S242, Q264, and H267. Q264 and H267 together coordinate Zn(2+). Residues E332 and H333 each act as proton acceptor in the active site. The substrate site is built by H333, D366, E420, and H425. D366 lines the Zn(2+) pocket. H425 contributes to the Zn(2+) binding site.

This sequence belongs to the histidinol dehydrogenase family. It depends on Zn(2+) as a cofactor.

The catalysed reaction is L-histidinol + 2 NAD(+) + H2O = L-histidine + 2 NADH + 3 H(+). It participates in amino-acid biosynthesis; L-histidine biosynthesis; L-histidine from 5-phospho-alpha-D-ribose 1-diphosphate: step 9/9. Catalyzes the sequential NAD-dependent oxidations of L-histidinol to L-histidinaldehyde and then to L-histidine. The polypeptide is Histidinol dehydrogenase (Desulfotalea psychrophila (strain LSv54 / DSM 12343)).